A 172-amino-acid polypeptide reads, in one-letter code: Protein-export protein SecB (172 aa).

Positions 1–22 are disordered; sequence MADETSADINNPALQPNGEDTS. Residues 7 to 20 show a composition bias toward polar residues; sequence ADINNPALQPNGED.

The protein belongs to the SecB family. Homotetramer, a dimer of dimers. One homotetramer interacts with 1 SecA dimer.

The protein resides in the cytoplasm. One of the proteins required for the normal export of preproteins out of the cell cytoplasm. It is a molecular chaperone that binds to a subset of precursor proteins, maintaining them in a translocation-competent state. It also specifically binds to its receptor SecA. This Sphingopyxis alaskensis (strain DSM 13593 / LMG 18877 / RB2256) (Sphingomonas alaskensis) protein is Protein-export protein SecB.